The sequence spans 281 residues: BURP domain-containing protein BNM2C (281 aa).

An N-terminal signal peptide occupies residues 1–25 (MASLRFSVTFPALFSLLLSLWVVDA). The BURP domain maps to 59-281 (FFKISDLKLG…PLDNIVWVSK (223 aa)).

Expressed in the radicle of germinating seeds 2 days post-imbibition (DPI) and in roots of 30-DPI young plants. Expressed in the embryo and seed coat tissues of developing seeds. The protein accumulates only in seeds and only long after transcript accumulation becomes evident.

The protein localises to the protein storage vacuole. The chain is BURP domain-containing protein BNM2C from Brassica napus (Rape).